We begin with the raw amino-acid sequence, 108 residues long: Nucleoid-associated protein IL1848 (108 aa).

Disordered stretches follow at residues 1–26 (MFKG…AQEE) and 88–108 (KERM…KMPF). Low complexity predominate over residues 9–26 (MMKQAQQMQERMQQAQEE).

It belongs to the YbaB/EbfC family. In terms of assembly, homodimer.

The protein resides in the cytoplasm. It localises to the nucleoid. Functionally, binds to DNA and alters its conformation. May be involved in regulation of gene expression, nucleoid organization and DNA protection. The protein is Nucleoid-associated protein IL1848 of Idiomarina loihiensis (strain ATCC BAA-735 / DSM 15497 / L2-TR).